A 182-amino-acid chain; its full sequence is uncharacterized protein (182 aa).

It belongs to the DNA 3' phosphatase family.

This is an uncharacterized protein from Autographa californica nuclear polyhedrosis virus (AcMNPV).